The primary structure comprises 697 residues: Elongation factor G (697 aa).

The region spanning 8-290 is the tr-type G domain; sequence ERYRNFGIMA…AVVDYLPSPL (283 aa). GTP contacts are provided by residues 17-24, 88-92, and 142-145; these read AHIDAGKT, DTPGH, and NKLD.

It belongs to the TRAFAC class translation factor GTPase superfamily. Classic translation factor GTPase family. EF-G/EF-2 subfamily.

Its subcellular location is the cytoplasm. In terms of biological role, catalyzes the GTP-dependent ribosomal translocation step during translation elongation. During this step, the ribosome changes from the pre-translocational (PRE) to the post-translocational (POST) state as the newly formed A-site-bound peptidyl-tRNA and P-site-bound deacylated tRNA move to the P and E sites, respectively. Catalyzes the coordinated movement of the two tRNA molecules, the mRNA and conformational changes in the ribosome. The polypeptide is Elongation factor G (Sphingopyxis alaskensis (strain DSM 13593 / LMG 18877 / RB2256) (Sphingomonas alaskensis)).